The following is a 341-amino-acid chain: HMG box-containing protein C10F6.08c (341 aa).

The segment covering 68–77 (SEAKSREFGQ) has biased composition (basic and acidic residues). Disordered regions lie at residues 68 to 195 (SEAK…SNAK) and 236 to 341 (LTEE…SSNA). 2 stretches are compositionally biased toward polar residues: residues 116 to 157 (DTNV…QVVQ) and 165 to 177 (NTDP…ITNL). Positions 178 to 195 (KTESSKSSGAKKATSNAK) are enriched in low complexity. Positions 195–263 (KITDTMLFNH…KAREARRRRS (69 aa)) form a DNA-binding region, HMG box. Composition is skewed to basic and acidic residues over residues 238 to 256 (EEEK…EKAR) and 269 to 304 (KLEK…GQKE). Phosphothreonine is present on residues Thr-314 and Thr-315. Ser-316 carries the phosphoserine modification.

The protein resides in the nucleus. The protein is HMG box-containing protein C10F6.08c of Schizosaccharomyces pombe (strain 972 / ATCC 24843) (Fission yeast).